A 344-amino-acid polypeptide reads, in one-letter code: Dihydroorotase (344 aa).

Zn(2+) contacts are provided by H13 and H15. Substrate-binding positions include H15–R17 and N41. Positions 98, 135, and 173 each coordinate Zn(2+). K98 carries the N6-carboxylysine modification. H135 provides a ligand contact to substrate. L218 contacts substrate. A Zn(2+)-binding site is contributed by D246. Residue D246 is part of the active site. The substrate site is built by H250 and A262.

Belongs to the metallo-dependent hydrolases superfamily. DHOase family. Class II DHOase subfamily. In terms of assembly, homodimer. Zn(2+) serves as cofactor.

The catalysed reaction is (S)-dihydroorotate + H2O = N-carbamoyl-L-aspartate + H(+). Its pathway is pyrimidine metabolism; UMP biosynthesis via de novo pathway; (S)-dihydroorotate from bicarbonate: step 3/3. In terms of biological role, catalyzes the reversible cyclization of carbamoyl aspartate to dihydroorotate. This is Dihydroorotase from Pseudoalteromonas atlantica (strain T6c / ATCC BAA-1087).